Here is a 745-residue protein sequence, read N- to C-terminus: DNA ligase (745 aa).

Residues 1 to 27 form a disordered region; the sequence is MRNHGPGSERKDACVSAPDPTFSDDVP. Residues 57 to 61, 106 to 107, and Glu135 contribute to the NAD(+) site; these read DAEYD and SL. Catalysis depends on Lys137, which acts as the N6-AMP-lysine intermediate. NAD(+) is bound by residues Arg158 and Glu197. Residues 216–235 form a disordered region; that stretch reads GKPPFANPRNAAAGSLRQKD. NAD(+) contacts are provided by Lys313 and Lys337. Positions 431, 434, 450, and 456 each coordinate Zn(2+). A BRCT domain is found at 649–738; sequence DGPRLLDGIT…PEAARAARLS (90 aa).

It belongs to the NAD-dependent DNA ligase family. LigA subfamily. Mg(2+) is required as a cofactor. Requires Mn(2+) as cofactor.

It catalyses the reaction NAD(+) + (deoxyribonucleotide)n-3'-hydroxyl + 5'-phospho-(deoxyribonucleotide)m = (deoxyribonucleotide)n+m + AMP + beta-nicotinamide D-nucleotide.. Functionally, DNA ligase that catalyzes the formation of phosphodiester linkages between 5'-phosphoryl and 3'-hydroxyl groups in double-stranded DNA using NAD as a coenzyme and as the energy source for the reaction. It is essential for DNA replication and repair of damaged DNA. The polypeptide is DNA ligase (Thermobifida fusca (strain YX)).